A 188-amino-acid polypeptide reads, in one-letter code: Cell division protein SepF (188 aa).

Positions 152 to 162 (TSHDEASTPTV) are enriched in polar residues. Positions 152–188 (TSHDEASTPTVVSRDAEAEQQQEAAAAPSPAWGATAL) are disordered.

It belongs to the SepF family. In terms of assembly, homodimer. Interacts with FtsZ.

Its subcellular location is the cytoplasm. Functionally, cell division protein that is part of the divisome complex and is recruited early to the Z-ring. Probably stimulates Z-ring formation, perhaps through the cross-linking of FtsZ protofilaments. Its function overlaps with FtsA. The chain is Cell division protein SepF from Parasynechococcus marenigrum (strain WH8102).